We begin with the raw amino-acid sequence, 267 residues long: MRVAALISGGKDSCYNMMQCVAAGHQIVALANLRPAENQVGSDELDSYMYQTVGHHAIDLYAEAMALPLYRRTIRGKSVDTGPVYTKCEGDEVEDLYELLKLVKEKEEVEGISVGAILSDYQRVRVENVCKRLNLQPLAYLWQRNQEDLLQEMISSNIQAIIIKVAALGLDPDKHLGKPLDQMEPYLLELSKKYGVHVCGEGGEYETFTLDCPLFKKKIIVDSSEVVTHSADAFAPVAYLRFLELHLEDKVSPVPDNCRTSNDIHNS.

Tyr97 carries the phosphotyrosine modification.

The protein belongs to the Diphthine--ammonia ligase family.

It carries out the reaction diphthine-[translation elongation factor 2] + NH4(+) + ATP = diphthamide-[translation elongation factor 2] + AMP + diphosphate + H(+). It participates in protein modification; peptidyl-diphthamide biosynthesis. In terms of biological role, amidase that catalyzes the last step of diphthamide biosynthesis using ammonium and ATP. Diphthamide biosynthesis consists in the conversion of an L-histidine residue in the translation elongation factor eEF-2 (EEF2) to diphthamide. In Bos taurus (Bovine), this protein is Diphthine--ammonia ligase (DPH6).